The following is a 282-amino-acid chain: Bifunctional protein FolD (282 aa).

NADP(+)-binding positions include 164–166 (GAS), isoleucine 189, and isoleucine 230.

It belongs to the tetrahydrofolate dehydrogenase/cyclohydrolase family. In terms of assembly, homodimer.

The enzyme catalyses (6R)-5,10-methylene-5,6,7,8-tetrahydrofolate + NADP(+) = (6R)-5,10-methenyltetrahydrofolate + NADPH. It catalyses the reaction (6R)-5,10-methenyltetrahydrofolate + H2O = (6R)-10-formyltetrahydrofolate + H(+). Its pathway is one-carbon metabolism; tetrahydrofolate interconversion. Catalyzes the oxidation of 5,10-methylenetetrahydrofolate to 5,10-methenyltetrahydrofolate and then the hydrolysis of 5,10-methenyltetrahydrofolate to 10-formyltetrahydrofolate. The sequence is that of Bifunctional protein FolD from Nitratiruptor sp. (strain SB155-2).